The following is a 773-amino-acid chain: Molybdenum cofactor sulfurase (773 aa).

An N6-(pyridoxal phosphate)lysine modification is found at Lys-243. Residue Cys-410 is part of the active site. In terms of domain architecture, MOSC spans 632–773; that stretch reads LRLLRQSGQR…LSCGDTVLVE (142 aa). Position 731 is a phosphoserine (Ser-731).

It belongs to the class-V pyridoxal-phosphate-dependent aminotransferase family. MOCOS subfamily. Pyridoxal 5'-phosphate is required as a cofactor.

It catalyses the reaction Mo-molybdopterin + L-cysteine + AH2 = thio-Mo-molybdopterin + L-alanine + A + H2O. It functions in the pathway cofactor biosynthesis; molybdopterin biosynthesis. In terms of biological role, sulfurates the molybdenum cofactor. Sulfation of molybdenum is essential for xanthine dehydrogenase (XDH) and aldehyde oxidase (ADO) enzymes in which molybdenum cofactor is liganded by 1 oxygen and 1 sulfur atom in active form. In Drosophila ananassae (Fruit fly), this protein is Molybdenum cofactor sulfurase.